We begin with the raw amino-acid sequence, 452 residues long: MTTTNNVLLVDDQHRNIGVTDDLHTIESLKSELTLDYDLPTLCGKNLDSPNILLNSIEKFKETFNKHYPFLEKINMKNLLIAGGSVSNIVRNKFQYGSDIDFFIYGLNQQEASSRVRQWLIDILVKKPDNSSEKTTTKKIDMTKYYKIIRNNNCITILLDHGDLKLQLIFRLYQSISEILHGFDLGSSAVGYDGENVYFTTLGKYCHEYSCNVIDTTRRSTTYEYRLNKYFDRGFNIVVPKLDLSKLKTFNLKYGEVEICELPYFIFSYQNIIGNKIIVKKFYDKYNIKSDYGLEPINSTNLYYQSLKINIGNLINDVDYYYYVSSHIDKQNTDILTKAPRLTKGDIITFYDGVRTKLNGKNIDVCLIRKYITIDTIENIVATMFHKDTNVKEYFDSIIEKQKELALNKLDILLQKNHNIVWITENPGKQLTSSFNPIIEVESKWYGEFYKE.

This is an uncharacterized protein from Acanthamoeba polyphaga (Amoeba).